The sequence spans 667 residues: E3 ubiquitin-protein ligase RNF6 (667 aa).

7 disordered regions span residues 1–25 (MDPSRSRSGGSGEESSFQENERRWQ), 75–100 (KEQLASQPGSDSAASDGDSESLRAHS), 116–216 (GNVT…QGSF), 295–355 (FSSR…TPLS), 396–419 (ETRDRDSIANRTRSRAGLAESTVE), 507–532 (GDAADDSGQHGRASSQASQAQDGAEM), and 537–556 (EPAPPQARPSGSRSRRQLGR). A compositionally biased stretch (low complexity) spans 79–90 (ASQPGSDSAASD). Positions 116–139 (GNVTRSGQNGNQSWRAVSRTNPNS) are enriched in polar residues. The span at 150–163 (INPDNRGSEMHGED) shows a compositional bias: basic and acidic residues. Residues 191–200 (SQTSMSSSGP) are compositionally biased toward low complexity. The segment covering 296-327 (SSRSRSPIQRQNGTVHHNSQRQGRPVQQTGRN) has biased composition (polar residues). The segment covering 516–530 (HGRASSQASQAQDGA) has biased composition (low complexity). A Phosphoserine modification is found at Ser-559. An RING-type; atypical zinc finger spans residues 614-655 (CSVCISDYVAGNKLRQLPCLHEFHIHCIDRWLSENCTCPVCR).

It belongs to the RNF12 family. Widely expressed with higher expression in the testis in both germ cells and Sertoli cells.

The protein localises to the nucleus. It localises to the cytoplasm. It is found in the cell projection. The protein resides in the axon. Its subcellular location is the PML body. The enzyme catalyses S-ubiquitinyl-[E2 ubiquitin-conjugating enzyme]-L-cysteine + [acceptor protein]-L-lysine = [E2 ubiquitin-conjugating enzyme]-L-cysteine + N(6)-ubiquitinyl-[acceptor protein]-L-lysine.. Its pathway is protein modification; protein ubiquitination. Its function is as follows. E3 ubiquitin-protein ligase mediating 'Lys-48'-linked polyubiquitination of LIMK1 and its subsequent targeting to the proteasome for degradation. Negatively regulates axonal outgrowth through regulation of the LIMK1 turnover. Mediates 'Lys-6' and 'Lys-27'-linked polyubiquitination of AR/androgen receptor thereby modulating its transcriptional activity. May also bind DNA and function as a transcriptional regulator. Mediates polyubiquitination of QKI in macrophages, leading to its degradation. This chain is E3 ubiquitin-protein ligase RNF6, found in Mus musculus (Mouse).